We begin with the raw amino-acid sequence, 208 residues long: Cell death-inducing p53-target protein 1 (208 aa).

Pro residues-rich tracts occupy residues 1–13 (MSSE…PGGP) and 36–67 (MQPP…PGFI). The disordered stretch occupies residues 1–71 (MSSEPPPPYP…PQPGFIPPHM (71 aa)). The region spanning 122–206 (ATTVTVLQGE…CKAYIYTYKR (85 aa)) is the LITAF domain. Zn(2+) is bound by residues Cys142 and Cys145. The interval 164–184 (LGFFCCFMGCDLGCCLIPCLI) is membrane-binding amphipathic helix. 2 residues coordinate Zn(2+): Cys194 and Cys197.

This sequence belongs to the CDIP1/LITAF family. In terms of tissue distribution, highly expressed in brain. Expressed at lower level in heart, skeletal muscle, kidney, pancreas and liver. Weakly or not expressed in placenta and lung.

It localises to the late endosome membrane. It is found in the lysosome membrane. Its function is as follows. Acts as an important p53/TP53-apoptotic effector. Regulates TNF-alpha-mediated apoptosis in a p53/TP53-dependent manner. This is Cell death-inducing p53-target protein 1 (CDIP1) from Homo sapiens (Human).